The following is a 318-amino-acid chain: GTP 3',8-cyclase (318 aa).

Residues 4 to 218 form the Radical SAM core domain; that stretch reads KHGRNIDYLR…MSRSDLIPIE (215 aa). Arg13 lines the GTP pocket. The [4Fe-4S] cluster site is built by Cys20 and Cys24. Residue Tyr26 participates in S-adenosyl-L-methionine binding. [4Fe-4S] cluster is bound at residue Cys27. Position 62 (Arg62) interacts with GTP. Residue Gly66 coordinates S-adenosyl-L-methionine. GTP is bound at residue Thr93. Ser117 contributes to the S-adenosyl-L-methionine binding site. Lys154 provides a ligand contact to GTP. Met188 lines the S-adenosyl-L-methionine pocket. [4Fe-4S] cluster-binding residues include Cys248 and Cys251. Residue 253-255 coordinates GTP; sequence KIR. Position 265 (Cys265) interacts with [4Fe-4S] cluster.

Belongs to the radical SAM superfamily. MoaA family. In terms of assembly, monomer and homodimer. [4Fe-4S] cluster is required as a cofactor.

It catalyses the reaction GTP + AH2 + S-adenosyl-L-methionine = (8S)-3',8-cyclo-7,8-dihydroguanosine 5'-triphosphate + 5'-deoxyadenosine + L-methionine + A + H(+). It participates in cofactor biosynthesis; molybdopterin biosynthesis. Functionally, catalyzes the cyclization of GTP to (8S)-3',8-cyclo-7,8-dihydroguanosine 5'-triphosphate. This chain is GTP 3',8-cyclase, found in Clostridium acetobutylicum (strain ATCC 824 / DSM 792 / JCM 1419 / IAM 19013 / LMG 5710 / NBRC 13948 / NRRL B-527 / VKM B-1787 / 2291 / W).